We begin with the raw amino-acid sequence, 84 residues long: NAD(P)H-quinone oxidoreductase subunit O (84 aa).

This sequence belongs to the complex I NdhO subunit family. In terms of assembly, NDH-1 can be composed of about 15 different subunits; different subcomplexes with different compositions have been identified which probably have different functions.

It is found in the cellular thylakoid membrane. It catalyses the reaction a plastoquinone + NADH + (n+1) H(+)(in) = a plastoquinol + NAD(+) + n H(+)(out). It carries out the reaction a plastoquinone + NADPH + (n+1) H(+)(in) = a plastoquinol + NADP(+) + n H(+)(out). Its function is as follows. NDH-1 shuttles electrons from an unknown electron donor, via FMN and iron-sulfur (Fe-S) centers, to quinones in the respiratory and/or the photosynthetic chain. The immediate electron acceptor for the enzyme in this species is believed to be plastoquinone. Couples the redox reaction to proton translocation, and thus conserves the redox energy in a proton gradient. Cyanobacterial NDH-1 also plays a role in inorganic carbon-concentration. This chain is NAD(P)H-quinone oxidoreductase subunit O, found in Synechococcus sp. (strain CC9605).